A 333-amino-acid polypeptide reads, in one-letter code: MGDWGFLEKLLDQVQEHSTVVGKIWLTVLFIFRILILGLAGESVWGDEQSDFECNTAQPGCTNVCYDQAFPISHIRYWVLQFLFVSTPTLVYLGHVIYLSRREERLRQKEGELRALPAKDPRVERALASIERQMAKISVAEDGHLRIRGALMGTYVASVLCKSVLEAGFLYGQWRLYGWTMEPVFVCQRSPCPYLVDCFVSRPTEKTIFIIFMLVVGLISLVLNLLELAYLLCRCLSRGVRARQRQDAPPAPGTSSEPYADQVFFYLPMSEGPSSPPCPTYNGLSSSEQNWANLTTEERLASSRAPLFLDPPPQTGRKSPSRPSSSASKKQYV.

Residues 1–20 lie on the Cytoplasmic side of the membrane; that stretch reads MGDWGFLEKLLDQVQEHSTV. Residues 21-40 form a helical membrane-spanning segment; that stretch reads VGKIWLTVLFIFRILILGLA. Topologically, residues 41-76 are extracellular; sequence GESVWGDEQSDFECNTAQPGCTNVCYDQAFPISHIR. Residues 77 to 99 traverse the membrane as a helical segment; sequence YWVLQFLFVSTPTLVYLGHVIYL. The Cytoplasmic segment spans residues 100-148; sequence SRREERLRQKEGELRALPAKDPRVERALASIERQMAKISVAEDGHLRIR. The chain crosses the membrane as a helical span at residues 149–165; it reads GALMGTYVASVLCKSVL. Over 166–207 the chain is Extracellular; sequence EAGFLYGQWRLYGWTMEPVFVCQRSPCPYLVDCFVSRPTEKT. The helical transmembrane segment at 208–230 threads the bilayer; the sequence is IFIIFMLVVGLISLVLNLLELAY. Residues 231-333 are Cytoplasmic-facing; sequence LLCRCLSRGV…SSSASKKQYV (103 aa). The segment at 303 to 333 is disordered; the sequence is SRAPLFLDPPPQTGRKSPSRPSSSASKKQYV. Low complexity predominate over residues 317–333; that stretch reads RKSPSRPSSSASKKQYV.

This sequence belongs to the connexin family. Alpha-type (group II) subfamily. As to quaternary structure, a connexon is composed of a hexamer of connexins.

Its subcellular location is the cell membrane. It is found in the cell junction. It localises to the gap junction. One gap junction consists of a cluster of closely packed pairs of transmembrane channels, the connexons, through which materials of low MW diffuse from one cell to a neighboring cell. In Bos taurus (Bovine), this protein is Gap junction alpha-4 protein (GJA4).